The sequence spans 557 residues: Dihydroxy-acid dehydratase (557 aa).

Position 50 (Cys50) interacts with [2Fe-2S] cluster. Asp82 is a Mg(2+) binding site. Cys123 contributes to the [2Fe-2S] cluster binding site. Positions 124 and 125 each coordinate Mg(2+). Lys125 is modified (N6-carboxylysine). Residue Cys195 coordinates [2Fe-2S] cluster. A Mg(2+)-binding site is contributed by Glu447. Ser473 serves as the catalytic Proton acceptor.

This sequence belongs to the IlvD/Edd family. Homodimer. [2Fe-2S] cluster serves as cofactor. Requires Mg(2+) as cofactor.

It catalyses the reaction (2R)-2,3-dihydroxy-3-methylbutanoate = 3-methyl-2-oxobutanoate + H2O. The enzyme catalyses (2R,3R)-2,3-dihydroxy-3-methylpentanoate = (S)-3-methyl-2-oxopentanoate + H2O. It participates in amino-acid biosynthesis; L-isoleucine biosynthesis; L-isoleucine from 2-oxobutanoate: step 3/4. It functions in the pathway amino-acid biosynthesis; L-valine biosynthesis; L-valine from pyruvate: step 3/4. Functions in the biosynthesis of branched-chain amino acids. Catalyzes the dehydration of (2R,3R)-2,3-dihydroxy-3-methylpentanoate (2,3-dihydroxy-3-methylvalerate) into 2-oxo-3-methylpentanoate (2-oxo-3-methylvalerate) and of (2R)-2,3-dihydroxy-3-methylbutanoate (2,3-dihydroxyisovalerate) into 2-oxo-3-methylbutanoate (2-oxoisovalerate), the penultimate precursor to L-isoleucine and L-valine, respectively. In Burkholderia pseudomallei (strain 1710b), this protein is Dihydroxy-acid dehydratase.